The following is a 503-amino-acid chain: Medium/long-chain-fatty-acid--CoA ligase FadD17 (503 aa).

Belongs to the ATP-dependent AMP-binding enzyme family.

It catalyses the reaction a medium-chain fatty acid + ATP + CoA = a medium-chain fatty acyl-CoA + AMP + diphosphate. The catalysed reaction is a long-chain fatty acid + ATP + CoA = a long-chain fatty acyl-CoA + AMP + diphosphate. Its pathway is lipid metabolism; fatty acid biosynthesis. Catalyzes the activation of medium/long-chain fatty acids as acyl-coenzyme A (acyl-CoA), which are then transferred to the multifunctional polyketide synthase (PKS) type III for further chain extension. In Mycobacterium marinum (strain ATCC BAA-535 / M), this protein is Medium/long-chain-fatty-acid--CoA ligase FadD17 (fadD17).